Consider the following 439-residue polypeptide: Probable RNA-binding protein 23 (439 aa).

Residues 13–159 (MLEAPYKKEE…PVREPVDNLS (147 aa)) are disordered. A compositionally biased stretch (basic and acidic residues) spans 17 to 34 (PYKKEEDEQQRKEVKKDY). Residues 36 to 57 (SNTTSSTSNSGNETSGSSTIGE) show a composition bias toward low complexity. The segment covering 60-90 (KKKRSRSHNKSRDRKRSRSRDRDRYRRRNSR) has biased composition (basic residues). Over residues 103–125 (RSWDRRHGSESRSRDHRREDRVH) the composition is skewed to basic and acidic residues. Residues serine 128 and serine 149 each carry the phosphoserine modification. Residues 144-159 (HFREKSPVREPVDNLS) are compositionally biased toward basic and acidic residues. RRM domains are found at residues 166-243 (RTVF…ASQA) and 263-341 (MRLY…HVTE).

Belongs to the splicing factor SR family. In terms of processing, aryl sulfonamide anticancer drugs, such as indisulam (E7070) or E7820, promote ubiquitination and subsequent degradation by the DCX(DCAF15) complex. Aryl sulfonamide anticancer drugs change the substrate specificity of DCAF15 by acting as a molecular glue that promotes binding between DCAF15 and weak affinity interactor RBM23. As to expression, highly expressed in placenta, liver, skeletal muscle, heart and kidney. Expressed at lower levels in the colon, thymus, spleen, small intestine and lung.

The protein resides in the nucleus. RNA-binding protein that acts both as a transcription coactivator and pre-mRNA splicing factor. Regulates steroid hormone receptor-mediated transcription, independently of the pre-mRNA splicing factor activity. This Homo sapiens (Human) protein is Probable RNA-binding protein 23.